We begin with the raw amino-acid sequence, 474 residues long: Trigger factor (474 aa).

Residues 171–258 (GDVAVIDFQG…LKELKTRDLP (88 aa)) enclose the PPIase FKBP-type domain. The disordered stretch occupies residues 441–474 (TEVDAASATVETTATETAEEAPEAPKAKKGKKKA). Positions 444-456 (DAASATVETTATE) are enriched in low complexity.

It belongs to the FKBP-type PPIase family. Tig subfamily.

The protein localises to the cytoplasm. The catalysed reaction is [protein]-peptidylproline (omega=180) = [protein]-peptidylproline (omega=0). Functionally, involved in protein export. Acts as a chaperone by maintaining the newly synthesized protein in an open conformation. Functions as a peptidyl-prolyl cis-trans isomerase. The sequence is that of Trigger factor from Synechococcus sp. (strain ATCC 27144 / PCC 6301 / SAUG 1402/1) (Anacystis nidulans).